A 164-amino-acid chain; its full sequence is ATP synthase subunit b 1 (164 aa).

Residues 8 to 28 (PETWVAIAFVILMGLFAYLGV) form a helical membrane-spanning segment.

It belongs to the ATPase B chain family. As to quaternary structure, F-type ATPases have 2 components, F(1) - the catalytic core - and F(0) - the membrane proton channel. F(1) has five subunits: alpha(3), beta(3), gamma(1), delta(1), epsilon(1). F(0) has three main subunits: a(1), b(2) and c(10-14). The alpha and beta chains form an alternating ring which encloses part of the gamma chain. F(1) is attached to F(0) by a central stalk formed by the gamma and epsilon chains, while a peripheral stalk is formed by the delta and b chains.

The protein localises to the cell inner membrane. F(1)F(0) ATP synthase produces ATP from ADP in the presence of a proton or sodium gradient. F-type ATPases consist of two structural domains, F(1) containing the extramembraneous catalytic core and F(0) containing the membrane proton channel, linked together by a central stalk and a peripheral stalk. During catalysis, ATP synthesis in the catalytic domain of F(1) is coupled via a rotary mechanism of the central stalk subunits to proton translocation. In terms of biological role, component of the F(0) channel, it forms part of the peripheral stalk, linking F(1) to F(0). The protein is ATP synthase subunit b 1 of Bradyrhizobium sp. (strain ORS 278).